Reading from the N-terminus, the 371-residue chain is Cytochrome b (371 aa).

4 helical membrane-spanning segments follow: residues phenylalanine 24–leucine 44, tryptophan 68–isoleucine 89, tryptophan 104–leucine 124, and phenylalanine 169–valine 189. Positions 74 and 88 each coordinate heme b. The heme b site is built by histidine 173 and histidine 187. An a ubiquinone-binding site is contributed by histidine 192. Transmembrane regions (helical) follow at residues tyrosine 217–alanine 237, leucine 279–histidine 299, leucine 311–threonine 331, and phenylalanine 338–proline 357.

It belongs to the cytochrome b family. As to quaternary structure, the cytochrome bc1 complex contains 3 respiratory subunits (MT-CYB, CYC1 and UQCRFS1), 2 core proteins (UQCRC1 and UQCRC2) and probably 6 low-molecular weight proteins. The cofactor is heme b.

The protein localises to the mitochondrion inner membrane. In terms of biological role, component of the ubiquinol-cytochrome c reductase complex (complex III or cytochrome b-c1 complex) that is part of the mitochondrial respiratory chain. The b-c1 complex mediates electron transfer from ubiquinol to cytochrome c. Contributes to the generation of a proton gradient across the mitochondrial membrane that is then used for ATP synthesis. The polypeptide is Cytochrome b (MT-CYB) (Homoroselaps lacteus (Spotted harlequin snake)).